The primary structure comprises 296 residues: Stanniocalcin-2 (296 aa).

The first 24 residues, 1 to 24, serve as a signal peptide directing secretion; it reads MCAERLGQFVTLALVFATLDPARG. Residues 22-44 are disordered; the sequence is ARGTDSTNPPEGPQDRGSQQKGR. Asn-73 carries an N-linked (GlcNAc...) asparagine glycan. Residues 236–296 form a disordered region; it reads RPYHRDTDHH…EQSEYSDIRR (61 aa). Residues 238–258 show a composition bias toward basic and acidic residues; that stretch reads YHRDTDHHLTANRGAKGERGS.

Belongs to the stanniocalcin family. In terms of assembly, homodimer; disulfide-linked. Expressed in a variety of tissues. Strongly expressed in ovary and to a lesser extent in kidney.

The protein localises to the secreted. Functionally, has an anti-hypocalcemic action on calcium and phosphate homeostasis. This Rattus norvegicus (Rat) protein is Stanniocalcin-2 (Stc2).